Reading from the N-terminus, the 158-residue chain is Large ribosomal subunit protein uL15 (158 aa).

The segment covering 1–13 (MKLNEIKDNEGST) has biased composition (basic and acidic residues). The disordered stretch occupies residues 1–45 (MKLNEIKDNEGSTHSRKRLGRGIGSGSGKTGGRGVKGQKSRSGVA). Residues 21–35 (RGIGSGSGKTGGRGV) show a composition bias toward gly residues.

It belongs to the universal ribosomal protein uL15 family. In terms of assembly, part of the 50S ribosomal subunit.

Binds to the 23S rRNA. This is Large ribosomal subunit protein uL15 from Rhizobium etli (strain CIAT 652).